A 162-amino-acid polypeptide reads, in one-letter code: Functional amyloid chaperone FapA (162 aa).

The signal sequence occupies residues 1–28; it reads MSGSSLRIVVPALLVIVGSVPVSLPAHA.

The protein belongs to the FapA family. In terms of assembly, monomer in solution. Interacts with FapC but not FapB in vitro.

It is found in the periplasm. In terms of biological role, an intrinsically disordered chaperone for fibril amyloid FapC that guards against fibrillation within the periplasm. Upon overexpression of the endogenous six-gene locus (fapA-fapF), cells form large clumps during liquid growth, make large amounts of biofilm and produce amyloid fibrils. This chain is Functional amyloid chaperone FapA, found in Pseudomonas aeruginosa (strain ATCC 15692 / DSM 22644 / CIP 104116 / JCM 14847 / LMG 12228 / 1C / PRS 101 / PAO1).